We begin with the raw amino-acid sequence, 223 residues long: Translation initiation factor 6 (223 aa).

This sequence belongs to the eIF-6 family.

Binds to the 50S ribosomal subunit and prevents its association with the 30S ribosomal subunit to form the 70S initiation complex. The protein is Translation initiation factor 6 of Saccharolobus islandicus (strain M.16.27) (Sulfolobus islandicus).